Here is a 184-residue protein sequence, read N- to C-terminus: Ribosome-recycling factor (184 aa).

Positions 133–153 are disordered; sequence DSNDELKKQQKNSDITEDDLR.

Belongs to the RRF family.

It is found in the cytoplasm. In terms of biological role, responsible for the release of ribosomes from messenger RNA at the termination of protein biosynthesis. May increase the efficiency of translation by recycling ribosomes from one round of translation to another. This Staphylococcus saprophyticus subsp. saprophyticus (strain ATCC 15305 / DSM 20229 / NCIMB 8711 / NCTC 7292 / S-41) protein is Ribosome-recycling factor.